The sequence spans 451 residues: UDP-N-acetylmuramoylalanine--D-glutamate ligase (451 aa).

119–125 is an ATP binding site; that stretch reads GSNGKTT.

The protein belongs to the MurCDEF family.

Its subcellular location is the cytoplasm. It catalyses the reaction UDP-N-acetyl-alpha-D-muramoyl-L-alanine + D-glutamate + ATP = UDP-N-acetyl-alpha-D-muramoyl-L-alanyl-D-glutamate + ADP + phosphate + H(+). It participates in cell wall biogenesis; peptidoglycan biosynthesis. Its function is as follows. Cell wall formation. Catalyzes the addition of glutamate to the nucleotide precursor UDP-N-acetylmuramoyl-L-alanine (UMA). This chain is UDP-N-acetylmuramoylalanine--D-glutamate ligase, found in Streptococcus mutans serotype c (strain ATCC 700610 / UA159).